The primary structure comprises 203 residues: MTPLVLLIIIGAYLLGSISSAVLISRLYRLPDPRDSGSGNPGATNVLRLGGKSAASMVLVCDVLKGMLPVWLSYFLNINPFLLGIIGIAACLGHIYPIFFHFRGGKGVATALGALAPIGWDLSGMLIGTWLLTVFITGYSSLGSLITALAAPLLTWFVKPEYTMAVSMLSCLIVLRHHDNLRRLFEGKETKIWQKISRKAKLK.

Helical transmembrane passes span 4–24, 80–100, 116–136, and 138–158; these read LVLL…AVLI, PFLL…PIFF, APIG…TVFI, and GYSS…TWFV.

The protein belongs to the PlsY family. In terms of assembly, probably interacts with PlsX.

It localises to the cell inner membrane. It catalyses the reaction an acyl phosphate + sn-glycerol 3-phosphate = a 1-acyl-sn-glycero-3-phosphate + phosphate. It functions in the pathway lipid metabolism; phospholipid metabolism. Functionally, catalyzes the transfer of an acyl group from acyl-phosphate (acyl-PO(4)) to glycerol-3-phosphate (G3P) to form lysophosphatidic acid (LPA). This enzyme utilizes acyl-phosphate as fatty acyl donor, but not acyl-CoA or acyl-ACP. The sequence is that of Glycerol-3-phosphate acyltransferase from Photobacterium profundum (strain SS9).